A 929-amino-acid chain; its full sequence is Protocadherin gamma-B3 (929 aa).

Residues 1-30 (MGNSSGWRGPAGQRRMLFLFLLSLLDQALS) form the signal peptide. 6 Cadherin domains span residues 31-133 (EPIR…PPTF), 134-242 (SQNI…PPVF), 243-347 (TQDM…APEI), 348-452 (TLAS…VPVF), 453-562 (HQAS…APLV), and 570-675 (EGSA…QPDL). Topologically, residues 31 to 691 (EPIRYAIPEE…SDPQAELQFH (661 aa)) are extracellular. Asn-136 carries N-linked (GlcNAc...) asparagine glycosylation. 2 N-linked (GlcNAc...) asparagine glycosylation sites follow: Asn-419 and Asn-545. A helical transmembrane segment spans residues 692-712 (LVVALALISVLFLLAVILAIS). The Cytoplasmic portion of the chain corresponds to 713–929 (LRLRCSSRPA…KKKSGKKEKK (217 aa)). Disordered stretches follow at residues 791–838 (NDNP…WPNN) and 899–929 (ATLT…KEKK). Positions 919 to 929 (NKKKSGKKEKK) are enriched in basic residues.

The protein resides in the cell membrane. Its function is as follows. Potential calcium-dependent cell-adhesion protein. May be involved in the establishment and maintenance of specific neuronal connections in the brain. The sequence is that of Protocadherin gamma-B3 (PCDHGB3) from Homo sapiens (Human).